The following is a 471-amino-acid chain: MKTLSPVDAVLKKVRAFNAEHGMFRPGDRVVVAVSGGADSVALVDILVSLNELRLDLVVAHLNHKLRGAASDEDERFVEQCAQTYALPFVSRGEQVKALAEWERLSLEDAGRRARYAFFDDVAAACGARTVALAHHADDQAETLLMRLVRGAGGLGLSAMQPVGAGGKYVRPLLALGRQEIEAYLDARGLAFRQDQSNTDVAFLRNRIRHELVPYLGRLNPGAASRLARTAELLADDEALLSRLVEEALRRHVMVTEQGGAICSVDTLRREPRGLRRRLYRKAIALAKGDLARISFDHVDAIDRLVLSENPSGRLHLPEEILVTRSYNEVAFARRMADIPSLQELWIDGPGCWPLSGGGELVVEIATGPPPWGELSTTESWFDLELAPFPWLIRGWRPGDRMIPLGMTGEKKVKDIFIDQKVPRELRRSIPLLFRGDSLLWVCGCRRGESARITAGSRAMAVVRIRGRRLK.

35-40 (SGGADS) serves as a coordination point for ATP.

It belongs to the tRNA(Ile)-lysidine synthase family.

It localises to the cytoplasm. The catalysed reaction is cytidine(34) in tRNA(Ile2) + L-lysine + ATP = lysidine(34) in tRNA(Ile2) + AMP + diphosphate + H(+). Ligates lysine onto the cytidine present at position 34 of the AUA codon-specific tRNA(Ile) that contains the anticodon CAU, in an ATP-dependent manner. Cytidine is converted to lysidine, thus changing the amino acid specificity of the tRNA from methionine to isoleucine. The polypeptide is tRNA(Ile)-lysidine synthase (Geobacter sulfurreducens (strain ATCC 51573 / DSM 12127 / PCA)).